Reading from the N-terminus, the 261-residue chain is Proliferating cell nuclear antigen (261 aa).

An N6-acetyllysine mark is found at lysine 14, lysine 77, and lysine 80. A DNA-binding region spans residues 61–80; the sequence is RCDRNLAMGVNLTSMSKILK. A disulfide bond links cysteine 135 and cysteine 162. A Glycyl lysine isopeptide (Lys-Gly) (interchain with G-Cter in SUMO2); alternate cross-link involves residue lysine 164. A Glycyl lysine isopeptide (Lys-Gly) (interchain with G-Cter in ubiquitin); alternate cross-link involves residue lysine 164. Phosphotyrosine; by EGFR is present on tyrosine 211. Residue lysine 248 is modified to N6-acetyllysine. A Glycyl lysine isopeptide (Lys-Gly) (interchain with G-Cter in SUMO2) cross-link involves residue lysine 254.

It belongs to the PCNA family. In terms of assembly, homotrimer. Interacts with p300/EP300; the interaction occurs on chromatin in UV-irradiated damaged cells. Interacts with CREBBP (via transactivation domain and C-terminus); the interaction occurs on chromatin in UV-irradiated damaged cells. Directly interacts with POLD1, POLD3 and POLD4 subunits of the DNA polymerase delta complex, POLD3 being the major interacting partner; the interaction with POLD3 is inhibited by CDKN1A/p21(CIP1). Forms a complex with activator 1 heteropentamer in the presence of ATP. Interacts with EXO1, POLH, POLK, DNMT1, ERCC5, FEN1, CDC6 and POLDIP2. Interacts with POLB. Interacts with APEX2; this interaction is triggered by reactive oxygen species and increased by misincorporation of uracil in nuclear DNA. Forms a ternary complex with DNTTIP2 and core histone. Interacts with KCTD10 and PPP1R15A. Interacts with SMARCA5/SNF2H. Interacts with BAZ1B/WSTF; the interaction is direct and is required for BAZ1B/WSTF binding to replication foci during S phase. Interacts with HLTF and SHPRH. Interacts with NUDT15; this interaction is disrupted in response to UV irradiation and acetylation. Interacts with CDKN1A/p21(CIP1) and CDT1; interacts via their PIP-box which also recruits the DCX(DTL) complex. The interaction with CDKN1A inhibits POLD3 binding. Interacts with DDX11. Interacts with EGFR; positively regulates PCNA. Interacts with PARPBP. Interacts (when ubiquitinated) with SPRTN; leading to enhance RAD18-mediated PCNA ubiquitination. Interacts (when polyubiquitinated) with ZRANB3. Interacts with SMARCAD1. Interacts with CDKN1C. Interacts with PCLAF (via PIP-box). Interacts with RTEL1 (via PIP-box); the interaction is direct and essential for the suppression of telomere fragility. Interacts with FAM111A (via PIP-box); the interaction is direct and required for PCNA loading on chromatin binding. Interacts with LIG1. Interacts with SETMAR. Interacts with ANKRD17. Interacts with FBXO18/FBH1 (via PIP-box); the interaction recruits the DCX(DTL) complex and promotes ubiquitination and degradation of FBXO18/FBH1. Interacts with POLN. Interacts with SDE2 (via PIP-box); the interaction is direct and prevents ultraviolet light induced monoubiquitination. Component of the replisome complex composed of at least DONSON, MCM2, MCM7, PCNA and TICRR; interaction at least with PCNA occurs during DNA replication. Interacts with MAPK15; the interaction is chromatin binding dependent and prevents MDM2-mediated PCNA destruction by inhibiting the association of PCNA with MDM2. Interacts with PARP10 (via PIP-box). Interacts with DDI2. Interacts with HMCES (via PIP-box). Interacts with TRAIP (via PIP-box). Interacts with UHRF2. Interacts with ALKBH2; this interaction is enhanced during the S-phase of the cell cycle. Interacts with ATAD5; the interaction promotes USP1-mediated PCNA deubiquitination. Interacts (when phosphorylated) with GRB2. Interacts with ANG. Interacts with nuclear UNG; this interaction mediates UNG recruitment to S-phase replication foci. Interacts with ERCC6L2 (via an atypical PIP-box); this interaction facilitates cenrtomeric localization of ERCC6L2. Post-translationally, phosphorylated. Phosphorylation at Tyr-211 by EGFR stabilizes chromatin-associated PCNA. In terms of processing, acetylated by CREBBP and p300/EP300; preferentially acetylated by CREBBP on Lys-80, Lys-13 and Lys-14 and on Lys-77 by p300/EP300 upon loading on chromatin in response to UV irradiation. Lysine acetylation disrupts association with chromatin, hence promoting PCNA ubiquitination and proteasomal degradation in response to UV damage in a CREBBP- and EP300-dependent manner. Acetylation disrupts interaction with NUDT15 and promotes degradation. Ubiquitinated. Following DNA damage, can be either monoubiquitinated to stimulate direct bypass of DNA lesions by specialized DNA polymerases or polyubiquitinated to promote recombination-dependent DNA synthesis across DNA lesions by template switching mechanisms. Following induction of replication stress, monoubiquitinated by the UBE2B-RAD18 complex on Lys-164, leading to recruit translesion (TLS) polymerases, which are able to synthesize across DNA lesions in a potentially error-prone manner. An error-free pathway also exists and requires non-canonical polyubiquitination on Lys-164 through 'Lys-63' linkage of ubiquitin moieties by the E2 complex UBE2N-UBE2V2 and the E3 ligases, HLTF, RNF8 and SHPRH. This error-free pathway, also known as template switching, employs recombination mechanisms to synthesize across the lesion, using as a template the undamaged, newly synthesized strand of the sister chromatid. Monoubiquitination at Lys-164 also takes place in undamaged proliferating cells, and is mediated by the DCX(DTL) complex, leading to enhance PCNA-dependent translesion DNA synthesis. Sumoylated during S phase. Post-translationally, methylated on glutamate residues by ARMT1.

It is found in the nucleus. Its function is as follows. Auxiliary protein of DNA polymerase delta and epsilon, is involved in the control of eukaryotic DNA replication by increasing the polymerase's processibility during elongation of the leading strand. Induces a robust stimulatory effect on the 3'-5' exonuclease and 3'-phosphodiesterase, but not apurinic-apyrimidinic (AP) endonuclease, APEX2 activities. Has to be loaded onto DNA in order to be able to stimulate APEX2. Plays a key role in DNA damage response (DDR) by being conveniently positioned at the replication fork to coordinate DNA replication with DNA repair and DNA damage tolerance pathways. Acts as a loading platform to recruit DDR proteins that allow completion of DNA replication after DNA damage and promote postreplication repair: Monoubiquitinated PCNA leads to recruitment of translesion (TLS) polymerases, while 'Lys-63'-linked polyubiquitination of PCNA is involved in error-free pathway and employs recombination mechanisms to synthesize across the lesion. The sequence is that of Proliferating cell nuclear antigen (PCNA) from Cricetulus griseus (Chinese hamster).